Reading from the N-terminus, the 631-residue chain is Fatty acid ABC transporter ATP-binding/permease protein (631 aa).

Positions 1–11 are enriched in low complexity; the sequence is MTAPPGARPRA. Positions 1–20 are disordered; that stretch reads MTAPPGARPRAASPPPNMRS. 3 helical membrane-spanning segments follow: residues 42-62, 123-143, and 205-225; these read IAVI…PRIL, LALA…QARL, and ILTM…LALI. Residues 42–365 form the ABC transmembrane type-1 domain; sequence IAVITLGIAG…LAGMYNALQS (324 aa). Residues 397–631 enclose the ABC transporter domain; that stretch reads VEFEHVNFAY…RGVYYQMTRA (235 aa). Residue 430-437 participates in ATP binding; sequence GPTGAGKT.

The protein belongs to the ABC transporter superfamily. Lipid exporter (TC 3.A.1.106) family.

Its subcellular location is the cell inner membrane. ABC transporter involved in fatty acid import. Transmembrane domains (TMD) form a pore in the membrane and the ATP-binding domain (NBD) is responsible for energy generation. The chain is Fatty acid ABC transporter ATP-binding/permease protein from Mycobacterium bovis (strain ATCC BAA-935 / AF2122/97).